The primary structure comprises 176 residues: Macro domain-containing protein lmo2759 (176 aa).

The Macro domain occupies 1 to 175 (MEITIVKGDI…LYNKLINSEV (175 aa)).

Belongs to the MacroD-type family.

The protein is Macro domain-containing protein lmo2759 of Listeria monocytogenes serovar 1/2a (strain ATCC BAA-679 / EGD-e).